A 308-amino-acid chain; its full sequence is Aspartate carbamoyltransferase catalytic subunit (308 aa).

Carbamoyl phosphate is bound by residues Arg-57 and Thr-58. Residue Lys-86 coordinates L-aspartate. Residues Arg-107, His-135, and Gln-138 each coordinate carbamoyl phosphate. L-aspartate contacts are provided by Arg-168 and Arg-229. Residues Leu-268 and Pro-269 each coordinate carbamoyl phosphate.

Belongs to the aspartate/ornithine carbamoyltransferase superfamily. ATCase family. Heterooligomer of catalytic and regulatory chains.

It catalyses the reaction carbamoyl phosphate + L-aspartate = N-carbamoyl-L-aspartate + phosphate + H(+). The protein operates within pyrimidine metabolism; UMP biosynthesis via de novo pathway; (S)-dihydroorotate from bicarbonate: step 2/3. Catalyzes the condensation of carbamoyl phosphate and aspartate to form carbamoyl aspartate and inorganic phosphate, the committed step in the de novo pyrimidine nucleotide biosynthesis pathway. This chain is Aspartate carbamoyltransferase catalytic subunit, found in Thermococcus gammatolerans (strain DSM 15229 / JCM 11827 / EJ3).